Here is a 419-residue protein sequence, read N- to C-terminus: Squamosa promoter-binding-like protein 2 (419 aa).

A disordered region spans residues 77-96 (SAEVRTHNFTSETGESLPGE). An SBP-type zinc finger spans residues 166-243 (TPHCQVEGCN…SDHNARRRKP (78 aa)). Positions 169, 174, 191, 194, 210, 213, 217, and 229 each coordinate Zn(2+). Residues 226–242 (KRSCRRRLSDHNARRRK) carry the Bipartite nuclear localization signal motif. Residues 230-249 (RRRLSDHNARRRKPNPGRTY) are disordered.

Zn(2+) is required as a cofactor.

It is found in the nucleus. In terms of biological role, trans-acting factor that binds specifically to the consensus nucleotide sequence 5'-TNCGTACAA-3'. This is Squamosa promoter-binding-like protein 2 (SPL2) from Arabidopsis thaliana (Mouse-ear cress).